We begin with the raw amino-acid sequence, 505 residues long: ATP synthase subunit alpha (505 aa).

An ATP-binding site is contributed by 170–177; sequence GDRQTGKT.

This sequence belongs to the ATPase alpha/beta chains family. F-type ATPases have 2 components, CF(1) - the catalytic core - and CF(0) - the membrane proton channel. CF(1) has five subunits: alpha(3), beta(3), gamma(1), delta(1), epsilon(1). CF(0) has four main subunits: a(1), b(1), b'(1) and c(9-12).

Its subcellular location is the cellular thylakoid membrane. The catalysed reaction is ATP + H2O + 4 H(+)(in) = ADP + phosphate + 5 H(+)(out). In terms of biological role, produces ATP from ADP in the presence of a proton gradient across the membrane. The alpha chain is a regulatory subunit. The chain is ATP synthase subunit alpha from Prochlorococcus marinus (strain MIT 9303).